A 229-amino-acid polypeptide reads, in one-letter code: Flagellar L-ring protein (229 aa).

An N-terminal signal peptide occupies residues 1-20 (MLKTVLRLPVCAALLALAAG). C21 carries the N-palmitoyl cysteine lipid modification. A lipid anchor (S-diacylglycerol cysteine) is attached at C21.

This sequence belongs to the FlgH family. In terms of assembly, the basal body constitutes a major portion of the flagellar organelle and consists of four rings (L,P,S, and M) mounted on a central rod.

Its subcellular location is the cell outer membrane. The protein localises to the bacterial flagellum basal body. In terms of biological role, assembles around the rod to form the L-ring and probably protects the motor/basal body from shearing forces during rotation. The polypeptide is Flagellar L-ring protein (Bordetella pertussis (strain Tohama I / ATCC BAA-589 / NCTC 13251)).